Here is a 246-residue protein sequence, read N- to C-terminus: Octanoyltransferase (246 aa).

One can recognise a BPL/LPL catalytic domain in the interval 30 to 227 (GRIGNTLLLL…QFGRVFGHQV (198 aa)). Residues 75-82 (RGGDVTYH), 155-157 (AIG), and 168-170 (GFA) contribute to the substrate site. Cysteine 186 acts as the Acyl-thioester intermediate in catalysis.

The protein belongs to the LipB family.

The protein localises to the cytoplasm. It carries out the reaction octanoyl-[ACP] + L-lysyl-[protein] = N(6)-octanoyl-L-lysyl-[protein] + holo-[ACP] + H(+). It functions in the pathway protein modification; protein lipoylation via endogenous pathway; protein N(6)-(lipoyl)lysine from octanoyl-[acyl-carrier-protein]: step 1/2. Its function is as follows. Catalyzes the transfer of endogenously produced octanoic acid from octanoyl-acyl-carrier-protein onto the lipoyl domains of lipoate-dependent enzymes. Lipoyl-ACP can also act as a substrate although octanoyl-ACP is likely to be the physiological substrate. The sequence is that of Octanoyltransferase from Acidobacterium capsulatum (strain ATCC 51196 / DSM 11244 / BCRC 80197 / JCM 7670 / NBRC 15755 / NCIMB 13165 / 161).